Here is a 357-residue protein sequence, read N- to C-terminus: Non-structural protein NS2 (357 aa).

Disordered regions lie at residues asparagine 163–methionine 199 and leucine 228–histidine 267. Composition is skewed to acidic residues over residues glutamate 230–aspartate 241 and aspartate 250–aspartate 260.

Belongs to the orbivirus non-structural protein NS2 family.

Functionally, single-stranded RNA-binding protein. This chain is Non-structural protein NS2 (Segment-8), found in Antilocapra americana (Pronghorn).